The primary structure comprises 270 residues: Protein US2 homolog (270 aa).

It belongs to the herpesviridae US2 family.

The polypeptide is Protein US2 homolog (MDV091) (Gallid herpesvirus 2 (strain Chicken/Md5/ATCC VR-987) (GaHV-2)).